The chain runs to 121 residues: Large ribosomal subunit protein bL17 (121 aa).

Belongs to the bacterial ribosomal protein bL17 family. In terms of assembly, part of the 50S ribosomal subunit. Contacts protein L32.

This chain is Large ribosomal subunit protein bL17, found in Mycoplasmopsis agalactiae (strain NCTC 10123 / CIP 59.7 / PG2) (Mycoplasma agalactiae).